Here is a 460-residue protein sequence, read N- to C-terminus: L-seryl-tRNA(Sec) selenium transferase (460 aa).

Lys-293 carries the N6-(pyridoxal phosphate)lysine modification.

It belongs to the SelA family. The cofactor is pyridoxal 5'-phosphate.

It localises to the cytoplasm. It carries out the reaction L-seryl-tRNA(Sec) + selenophosphate + H(+) = L-selenocysteinyl-tRNA(Sec) + phosphate. Its pathway is aminoacyl-tRNA biosynthesis; selenocysteinyl-tRNA(Sec) biosynthesis; selenocysteinyl-tRNA(Sec) from L-seryl-tRNA(Sec) (bacterial route): step 1/1. Converts seryl-tRNA(Sec) to selenocysteinyl-tRNA(Sec) required for selenoprotein biosynthesis. This Haemophilus ducreyi (strain 35000HP / ATCC 700724) protein is L-seryl-tRNA(Sec) selenium transferase.